We begin with the raw amino-acid sequence, 354 residues long: Histidinol-phosphate aminotransferase (354 aa).

Position 210 is an N6-(pyridoxal phosphate)lysine (Lys210).

This sequence belongs to the class-II pyridoxal-phosphate-dependent aminotransferase family. Histidinol-phosphate aminotransferase subfamily. Homodimer. It depends on pyridoxal 5'-phosphate as a cofactor.

The catalysed reaction is L-histidinol phosphate + 2-oxoglutarate = 3-(imidazol-4-yl)-2-oxopropyl phosphate + L-glutamate. It participates in amino-acid biosynthesis; L-histidine biosynthesis; L-histidine from 5-phospho-alpha-D-ribose 1-diphosphate: step 7/9. The chain is Histidinol-phosphate aminotransferase from Clostridium botulinum (strain Langeland / NCTC 10281 / Type F).